The sequence spans 351 residues: MAVLVVFLSFLVADVFGNEFSILRSPGSVVFRNGNWPIPGERIPDVAALSMGFSVKEDLSWPGLAVGNLFHRPRATVMVMVKGVDKLALPPGSVISYPLENAVPFSLDSVANSIHSLFSEETPVVLQLAPSEERVYMVGKANSVFEDLSVTLRQLRNRLFQENSVLTSLPLNSLSRNNEVDLLFLSELQVLRDISSLLSRHKHLAKDHSPDLYSLELAGLDEIGKHYGEDSEQFRDASKILIDALQKFADDMYNLYGGNAVVELVTVRSFDTSLVRKTRNILETKQVKDPSTTYNLAYKYNFEYPVVFNLVLWIMIGLALTLIVTCYNIWNMDPGYDSIIYRMTNQKIRMD.

A signal peptide spans 1-17 (MAVLVVFLSFLVADVFG). Topologically, residues 18–303 (NEFSILRSPG…YNLAYKYNFE (286 aa)) are extracellular. A helical membrane pass occupies residues 304-324 (YPVVFNLVLWIMIGLALTLIV). At 325 to 351 (TCYNIWNMDPGYDSIIYRMTNQKIRMD) the chain is on the cytoplasmic side. The Mediates retrograde transport to the ER signature appears at 347–351 (KIRMD).

In terms of assembly, interacts with renin. Accessory component of the multisubunit proton-transporting vacuolar (V)-ATPase protein pump. Interacts (via N-terminus) with ATP6AP1 (via N-terminus). Interacts with ATP6V0D1; ATP6V0D1 is a V-ATPase complex subunit and the interaction promotes V-ATPase complex assembly. Interacts with TMEM9; TMEM9 is a V-ATPase assembly regulator and the interaction induces the interaction with ATP6V0D1. Interacts with VMA21 (via N-terminus); VMA21 is a V-ATPase accessory component. In terms of processing, phosphorylated. Proteolytically cleaved by a furin-like convertase in the trans-Golgi network to generate N- and C-terminal fragments. Expressed in the brain.

Its subcellular location is the endoplasmic reticulum membrane. It localises to the lysosome membrane. The protein resides in the cytoplasmic vesicle. The protein localises to the autophagosome membrane. It is found in the cell projection. Its subcellular location is the dendritic spine membrane. It localises to the axon. The protein resides in the endosome membrane. The protein localises to the clathrin-coated vesicle membrane. It is found in the secretory vesicle. Its subcellular location is the synaptic vesicle membrane. Multifunctional protein which functions as a renin, prorenin cellular receptor and is involved in the assembly of the lysosomal proton-transporting V-type ATPase (V-ATPase) and the acidification of the endo-lysosomal system. May mediate renin-dependent cellular responses by activating ERK1 and ERK2. By increasing the catalytic efficiency of renin in AGT/angiotensinogen conversion to angiotensin I, may also play a role in the renin-angiotensin system (RAS). Through its function in V-type ATPase (v-ATPase) assembly and acidification of the lysosome it regulates protein degradation and may control different signaling pathways important for proper brain development, synapse morphology and synaptic transmission. This is Renin receptor (ATP6AP2) from Bos taurus (Bovine).